The primary structure comprises 657 residues: Protein FAM200B (657 aa).

Belongs to the FAM200 family.

This chain is Protein FAM200B, found in Homo sapiens (Human).